The sequence spans 1881 residues: Genome polyprotein (1881 aa).

Residues 1–16 show a composition bias toward polar residues; the sequence is MAQTLSKISNKENASS. The disordered stretch occupies residues 1–93; the sequence is MAQTLSKISN…SHLKPASTDV (93 aa). A compositionally biased stretch (basic and acidic residues) spans 37 to 50; sequence EPLDHDSRRGRDPV. The SF3 helicase domain maps to 564–720; that stretch reads DKVISCCTRR…DKWKSDNPGK (157 aa). Residue 590 to 597 coordinates ATP; that stretch reads GPPGCGKT. Y1093 carries the O-(5'-phospho-RNA)-tyrosine modification. The region spanning 1188–1341 is the Peptidase C24 domain; sequence GVTHKNAIVS…KLIVPYVKVD (154 aa). Catalysis depends on for 3CLpro activity residues H1222, E1243, and C1305. The RdRp catalytic domain maps to 1593-1718; that stretch reads HDRYCVDYSK…IVPPLISSVM (126 aa).

In terms of assembly, homodimer. Interacts with NTPase, protein p30 and protease-polymerase p76. As to quaternary structure, interacts with capsid protein VP1 and protease-polymerase p76. Interacts with host IEF4e; this interaction plays a role in translation of viral proteins. Homooligomer. Interacts with Vpg, protein p32 and may interact with capsid protein VP1. In terms of processing, specific enzymatic cleavages in vivo yield mature proteins. Pro-Pol is first autocatalytically cleaved, then processes the whole polyprotein. Post-translationally, VPg is uridylylated by the polymerase and is covalently attached to the 5'-end of the polyadenylated genomic and subgenomic RNAs. This uridylylated form acts as a nucleotide-peptide primer for the polymerase.

It is found in the host endoplasmic reticulum membrane. It carries out the reaction a ribonucleoside 5'-triphosphate + H2O = a ribonucleoside 5'-diphosphate + phosphate + H(+). The enzyme catalyses RNA(n) + a ribonucleoside 5'-triphosphate = RNA(n+1) + diphosphate. It catalyses the reaction Endopeptidase with a preference for cleavage when the P1 position is occupied by Glu-|-Xaa and the P1' position is occupied by Gly-|-Yaa.. In terms of biological role, together with NTPase and NS4, initiates the formation of the replication complex. Induces the proliferation of the host smooth ER membranes forming long tubular structures. These remodeled membranes probably form the viral factories that contain the replication complex. Functionally, displays NTPase activity, but no helicase activity. Induces the formation of convoluted membranes derived from the host ER. These remodeled membranes probably form the viral factories that contain the replication complex. Together with NS2 and NS4, initiates the formation of the replication complex. Its function is as follows. Probable key protein responsible for the formation of membrane alterations by the virus. Induces the formation of convoluted membranes derived from the host ER. These remodeled membranes probably form the viral factories that contain the replication complex. Together with NS2 and NTPase, initiates the formation of the replication complex. Viral genome-linked protein is covalently linked to the 5'-end of the positive-strand, negative-strand genomic RNAs and subgenomic RNA. Acts as a genome-linked replication primer. May recruit ribosome to viral RNA thereby promoting viral proteins translation. Interacts with host translation initiation complex to allow the translation of viral proteins. In terms of biological role, protease-polymerase p76 processes the polyprotein: Pro-Pol is first released by autocleavage, then all other proteins are cleaved. Cleaves host translation initiation factor eIF4G1, eIF4G2 and PABP1 thereby inducing a shutdown of host protein synthesis. This shutdown may not prevent viral mRNA from being translated since viral Vpg replaces the cap. Also functions as an RNA-directed RNA polymerase, which replicates genomic and antigenomic viral RNA by recognizing specific signals. Also transcribes a subgenomic mRNA by initiating RNA synthesis internally on antigenomic RNA. This sgRNA codes for structural proteins. Catalyzes the covalent attachment VPg with viral RNAs. The chain is Genome polyprotein from Vesicular exanthema of swine virus serotype A48 (isolate Swine/United States/A48/1948) (VESV).